A 154-amino-acid polypeptide reads, in one-letter code: Heat shock protein beta-3 (154 aa).

Residues 48 to 71 (ARGAGTPQALAEDSASTEKPPGEG) form a disordered region. The sHSP domain maps to 57 to 154 (LAEDSASTEK…VEVKDSLGTK (98 aa)).

The protein belongs to the small heat shock protein (HSP20) family.

It is found in the cytoplasm. Its subcellular location is the nucleus. In terms of biological role, inhibitor of actin polymerization. The protein is Heat shock protein beta-3 (Hspb3) of Mus musculus (Mouse).